Here is a 63-residue protein sequence, read N- to C-terminus: MKAQELRNKNVEELNAELNNLLGEQFKLRMQAATGQLQQTHQLKQVRRNIARVKTVLNQKAGE.

It belongs to the universal ribosomal protein uL29 family.

The protein is Large ribosomal subunit protein uL29 of Actinobacillus succinogenes (strain ATCC 55618 / DSM 22257 / CCUG 43843 / 130Z).